Here is a 314-residue protein sequence, read N- to C-terminus: Ribonucleoside-diphosphate reductase small subunit (314 aa).

3 residues coordinate Fe cation: aspartate 73, glutamate 103, and histidine 106. Tyrosine 110 is an active-site residue. Residues 160 to 180 form a helical membrane-spanning segment; sequence VLMILIEGIFFSSSFAAIAYL. Fe cation-binding residues include glutamate 166, glutamate 200, and histidine 203.

This sequence belongs to the ribonucleoside diphosphate reductase small chain family. In terms of assembly, heterotetramer composed of a homodimer of the large subunit (R1) and a homodimer of the small subunit (R2). Larger multisubunit protein complex are also active, composed of (R1)n(R2)n. It depends on Fe cation as a cofactor.

The protein localises to the host membrane. It carries out the reaction a 2'-deoxyribonucleoside 5'-diphosphate + [thioredoxin]-disulfide + H2O = a ribonucleoside 5'-diphosphate + [thioredoxin]-dithiol. In terms of biological role, ribonucleoside-diphosphate reductase holoenzyme provides the precursors necessary for viral DNA synthesis. Allows virus growth in non-dividing cells, as well as reactivation from latency in infected hosts. Catalyzes the biosynthesis of deoxyribonucleotides from the corresponding ribonucleotides. The protein is Ribonucleoside-diphosphate reductase small subunit of Bovine herpesvirus 1.1 (strain Cooper) (BoHV-1).